The chain runs to 355 residues: Fructose-1,6-bisphosphatase (355 aa).

Residues 25–30 and 37–41 each bind AMP; these read ILDQQH and TGEFS. Mg(2+) contacts are provided by D78 and E107. Residue 121–122 participates in AMP binding; that stretch reads KY. D127, I129, and D130 together coordinate Mg(2+). 130–133 is a substrate binding site; that stretch reads DGSS. K149 is a binding site for AMP. Substrate contacts are provided by residues 230 to 233, 263 to 268, Y284, and 294 to 296; these read NEGN, RYIGSM, and KLR. E300 is a Mg(2+) binding site.

This sequence belongs to the FBPase class 1 family. Homotetramer. Mg(2+) is required as a cofactor.

The catalysed reaction is beta-D-fructose 1,6-bisphosphate + H2O = beta-D-fructose 6-phosphate + phosphate. Its pathway is carbohydrate biosynthesis; gluconeogenesis. Subject to complex allosteric regulation. The enzyme can assume an active R-state, or an inactive T-state. Intermediate conformations may exist. AMP acts as allosteric inhibitor. AMP binding affects the turnover of bound substrate and not the affinity for substrate. In Kluyveromyces lactis (strain ATCC 8585 / CBS 2359 / DSM 70799 / NBRC 1267 / NRRL Y-1140 / WM37) (Yeast), this protein is Fructose-1,6-bisphosphatase (FBP1).